Reading from the N-terminus, the 329-residue chain is DNA-directed RNA polymerase subunit alpha (329 aa).

The segment at 1–231 (MSILSFQMPE…KHFMLFSDQT (231 aa)) is alpha N-terminal domain (alpha-NTD). The interval 247-329 (EEFLHMRKLL…DTAKYKLDED (83 aa)) is alpha C-terminal domain (alpha-CTD).

The protein belongs to the RNA polymerase alpha chain family. In terms of assembly, homodimer. The RNAP catalytic core consists of 2 alpha, 1 beta, 1 beta' and 1 omega subunit. When a sigma factor is associated with the core the holoenzyme is formed, which can initiate transcription.

It catalyses the reaction RNA(n) + a ribonucleoside 5'-triphosphate = RNA(n+1) + diphosphate. Functionally, DNA-dependent RNA polymerase catalyzes the transcription of DNA into RNA using the four ribonucleoside triphosphates as substrates. The protein is DNA-directed RNA polymerase subunit alpha of Cytophaga hutchinsonii (strain ATCC 33406 / DSM 1761 / CIP 103989 / NBRC 15051 / NCIMB 9469 / D465).